The sequence spans 429 residues: Glutamate-1-semialdehyde 2,1-aminomutase (429 aa).

Lys267 carries the post-translational modification N6-(pyridoxal phosphate)lysine.

It belongs to the class-III pyridoxal-phosphate-dependent aminotransferase family. HemL subfamily. As to quaternary structure, homodimer. The cofactor is pyridoxal 5'-phosphate.

It is found in the cytoplasm. It catalyses the reaction (S)-4-amino-5-oxopentanoate = 5-aminolevulinate. The protein operates within porphyrin-containing compound metabolism; protoporphyrin-IX biosynthesis; 5-aminolevulinate from L-glutamyl-tRNA(Glu): step 2/2. The chain is Glutamate-1-semialdehyde 2,1-aminomutase from Herpetosiphon aurantiacus (strain ATCC 23779 / DSM 785 / 114-95).